The sequence spans 97 residues: Protein YcgL (97 aa).

The 85-residue stretch at 1–85 folds into the YcgL domain; the sequence is MLCVIYRSSK…PPEDLLKQHL (85 aa).

The protein is Protein YcgL of Escherichia fergusonii (strain ATCC 35469 / DSM 13698 / CCUG 18766 / IAM 14443 / JCM 21226 / LMG 7866 / NBRC 102419 / NCTC 12128 / CDC 0568-73).